A 102-amino-acid polypeptide reads, in one-letter code: Large ribosomal subunit protein bL28 (102 aa).

The segment at 1–20 (MSRRCELTAKGPQVGHKVSH) is disordered.

The protein belongs to the bacterial ribosomal protein bL28 family.

This chain is Large ribosomal subunit protein bL28, found in Bradyrhizobium sp. (strain ORS 278).